Consider the following 341-residue polypeptide: Anthranilate phosphoribosyltransferase (341 aa).

5-phospho-alpha-D-ribose 1-diphosphate-binding positions include Gly84, 94 to 97 (NVST), 112 to 120 (KHGGRAASS), and Ser124. Residue Gly84 participates in anthranilate binding. Ser96 is a Mg(2+) binding site. An anthranilate-binding site is contributed by Arg170. 2 residues coordinate Mg(2+): Asp229 and Glu230.

The protein belongs to the anthranilate phosphoribosyltransferase family. As to quaternary structure, homodimer. Mg(2+) is required as a cofactor.

The enzyme catalyses N-(5-phospho-beta-D-ribosyl)anthranilate + diphosphate = 5-phospho-alpha-D-ribose 1-diphosphate + anthranilate. It participates in amino-acid biosynthesis; L-tryptophan biosynthesis; L-tryptophan from chorismate: step 2/5. Its function is as follows. Catalyzes the transfer of the phosphoribosyl group of 5-phosphorylribose-1-pyrophosphate (PRPP) to anthranilate to yield N-(5'-phosphoribosyl)-anthranilate (PRA). The sequence is that of Anthranilate phosphoribosyltransferase from Methylobacillus flagellatus (strain ATCC 51484 / DSM 6875 / VKM B-1610 / KT).